The primary structure comprises 550 residues: Chaperonin GroEL (550 aa).

Residues 30–33 (TLGP), Lys-51, 87–91 (DGTTT), Gly-415, 478–480 (NAA), and Asp-494 contribute to the ATP site.

This sequence belongs to the chaperonin (HSP60) family. Forms a cylinder of 14 subunits composed of two heptameric rings stacked back-to-back. Interacts with the co-chaperonin GroES.

The protein localises to the cytoplasm. It catalyses the reaction ATP + H2O + a folded polypeptide = ADP + phosphate + an unfolded polypeptide.. Functionally, together with its co-chaperonin GroES, plays an essential role in assisting protein folding. The GroEL-GroES system forms a nano-cage that allows encapsulation of the non-native substrate proteins and provides a physical environment optimized to promote and accelerate protein folding. In Desulfosudis oleivorans (strain DSM 6200 / JCM 39069 / Hxd3) (Desulfococcus oleovorans), this protein is Chaperonin GroEL.